Here is a 346-residue protein sequence, read N- to C-terminus: Flap endonuclease 1 (346 aa).

Positions 1 to 100 (MGVDIKELVE…KELERRYQIK (100 aa)) are N-domain. Residues D29, D82, E154, E156, D175, D177, and D238 each contribute to the Mg(2+) site. Residues 118-260 (EARIYAQQTS…KALKLVKELK (143 aa)) are I-domain. Residues 336–344 (KQQSLESWF) are interaction with PCNA.

The protein belongs to the XPG/RAD2 endonuclease family. FEN1 subfamily. In terms of assembly, interacts with PCNA. PCNA stimulates the nuclease activity without altering cleavage specificity. Mg(2+) is required as a cofactor.

In terms of biological role, structure-specific nuclease with 5'-flap endonuclease and 5'-3' exonuclease activities involved in DNA replication and repair. During DNA replication, cleaves the 5'-overhanging flap structure that is generated by displacement synthesis when DNA polymerase encounters the 5'-end of a downstream Okazaki fragment. Binds the unpaired 3'-DNA end and kinks the DNA to facilitate 5' cleavage specificity. Cleaves one nucleotide into the double-stranded DNA from the junction in flap DNA, leaving a nick for ligation. Also involved in the base excision repair (BER) pathway. Acts as a genome stabilization factor that prevents flaps from equilibrating into structures that lead to duplications and deletions. Also possesses 5'-3' exonuclease activity on nicked or gapped double-stranded DNA. The chain is Flap endonuclease 1 from Thermofilum pendens (strain DSM 2475 / Hrk 5).